The chain runs to 119 residues: Protein yippee-like 3 (119 aa).

The Yippee domain occupies 19 to 116 (RRYSCVHCRA…IELSHMIKDN (98 aa)). C23, C26, C79, and C82 together coordinate Zn(2+).

Belongs to the yippee family.

It is found in the nucleus. The protein localises to the nucleolus. In terms of biological role, may be involved in proliferation and apoptosis in myeloid precursor cells. The protein is Protein yippee-like 3 (ypel3) of Danio rerio (Zebrafish).